Reading from the N-terminus, the 357-residue chain is Uroporphyrinogen decarboxylase (357 aa).

Substrate-binding positions include 30–34 (RQAGR), D79, Y154, S209, and H336.

Belongs to the uroporphyrinogen decarboxylase family. As to quaternary structure, homodimer.

Its subcellular location is the cytoplasm. It carries out the reaction uroporphyrinogen III + 4 H(+) = coproporphyrinogen III + 4 CO2. It functions in the pathway porphyrin-containing compound metabolism; protoporphyrin-IX biosynthesis; coproporphyrinogen-III from 5-aminolevulinate: step 4/4. Catalyzes the decarboxylation of four acetate groups of uroporphyrinogen-III to yield coproporphyrinogen-III. This chain is Uroporphyrinogen decarboxylase, found in Mycobacterium leprae (strain Br4923).